Here is a 223-residue protein sequence, read N- to C-terminus: tRNA (guanine-N(7)-)-methyltransferase (223 aa).

S-adenosyl-L-methionine-binding residues include Glu45, Glu70, and Asp125. Asp125 is a catalytic residue. Substrate is bound by residues Lys129, Asp161, and 201–204; that span reads TEYE.

It belongs to the class I-like SAM-binding methyltransferase superfamily. TrmB family.

The catalysed reaction is guanosine(46) in tRNA + S-adenosyl-L-methionine = N(7)-methylguanosine(46) in tRNA + S-adenosyl-L-homocysteine. It participates in tRNA modification; N(7)-methylguanine-tRNA biosynthesis. Catalyzes the formation of N(7)-methylguanine at position 46 (m7G46) in tRNA. This chain is tRNA (guanine-N(7)-)-methyltransferase, found in Mesoplasma florum (strain ATCC 33453 / NBRC 100688 / NCTC 11704 / L1) (Acholeplasma florum).